The chain runs to 357 residues: Histidinol-phosphate aminotransferase 2 (357 aa).

At K215 the chain carries N6-(pyridoxal phosphate)lysine.

The protein belongs to the class-II pyridoxal-phosphate-dependent aminotransferase family. Histidinol-phosphate aminotransferase subfamily. Homodimer. It depends on pyridoxal 5'-phosphate as a cofactor.

The catalysed reaction is L-histidinol phosphate + 2-oxoglutarate = 3-(imidazol-4-yl)-2-oxopropyl phosphate + L-glutamate. The protein operates within amino-acid biosynthesis; L-histidine biosynthesis; L-histidine from 5-phospho-alpha-D-ribose 1-diphosphate: step 7/9. In Thiobacillus denitrificans (strain ATCC 25259 / T1), this protein is Histidinol-phosphate aminotransferase 2.